A 230-amino-acid polypeptide reads, in one-letter code: MYDIKKWRHIFKLDPAKHISDDDLDAICMSQTDAIMIGGTDDVTEDNVIHLMSRVRRYPLPLVLEISNIESVMPGFDFYFVPTVLNSTDVAFHNGTLLEALKTYGHSIDFEEVIFEGYVVCNADSKVAKHTKANTDLTTEDLEAYAQMVNHLYRLPVMYIEYSGIYGDVSKVQAVSEHLTETQLFYGGGISSEQQATEMAAIADTIIVGDIIYKDIKKALKTVKIKESSK.

Residue Lys12 participates in sn-glycerol 1-phosphate binding. Mg(2+)-binding residues include Asp14 and Thr40. Residues 159 to 164 (YIEYSG), Gly189, and 209 to 210 (GD) contribute to the sn-glycerol 1-phosphate site.

The protein belongs to the GGGP/HepGP synthase family. Group I subfamily. In terms of assembly, homodimer. The cofactor is Mg(2+).

The enzyme catalyses sn-glycerol 1-phosphate + all-trans-heptaprenyl diphosphate = 3-heptaprenyl-sn-glycero-1-phosphate + diphosphate. The protein operates within membrane lipid metabolism; glycerophospholipid metabolism. Prenyltransferase that catalyzes in vivo the transfer of the heptaprenyl moiety of heptaprenyl pyrophosphate (HepPP; 35 carbon atoms) to the C3 hydroxyl of sn-glycerol-1-phosphate (G1P), producing heptaprenylglyceryl phosphate (HepGP). This reaction is an ether-bond-formation step in the biosynthesis of archaea-type G1P-based membrane lipids found in Bacillales. The chain is Heptaprenylglyceryl phosphate synthase from Staphylococcus aureus (strain MRSA252).